Consider the following 856-residue polypeptide: MKVKGIQGNWQNWWKWGTLILGLVIICSAAENLWVTVYYGVPVWKDAETTLFCASDAKAYDTEKHNVWATHACVPTDPNPQELSLGNVTEKFDMWKNNMVEQMHEDVISLWDQSLKPCVKLTPLCVTLSCHNITIKDNNTNVDTEMKEEIKNCSYNMTTELRDKQRKIYSLFYRLDIVPIGGNSSNGDSSKYRLINCNTSAITQACPKVSFEPIPIHYCAPAGFAILKCRDEEFEGKGPCRNVSTVQCTHGIRPVVSTQLLLNGSLAEGEVRIRSENFTDNAKIIIVQLVKPVNITCMRPNNNTRKSISIGPGRAFFATGDIIGDIRQAHCNVSRTEWNDTLSKVAAQLRKHFVNTSTDIIFANSSGGDVEITTHSFNCGGEFFYCNTSGLFNGTWLNGTSNNTWKIDTVNDTIILPCRIKQIVNMWQRVGQAMYAPPIKGVIKCVSNITGILLTRDGVGNNTSNETFRPGGGDMRDNWRSELYKYKVVKIEPLGVAPTKAKRRVVAREKRAIGMGAFFLGFLGAAGSTMGAASITLTVQARRLLSGIVQQQNNLLRAIEAQQHLLKLTVWGIKQLQARILAVERYLKDQQLLGIWGCSGKIICPTNVPWNSSWSNKSQSDIWDKMTWLEWDKEVSNYTQVIYNLIEESQTQQEINERDLLALDKWANLWNWFDISNWLWYIKIFIMIVGGLIGLRIVFAVLSIINRVRQGYSPLSFQTLTHHQREPDRPERIEEGGGEQDRDRSIRLVSGFLPLAWDDLRSLCLFCYHRLRDCALIAARIVETLIRRGWETLKYLGNLVIYWGQELKNSAINLLDTVAIAVADWTDRVIEVVQRAGRAFLNIPRRIRQGLERALL.

Residues 1–31 (MKVKGIQGNWQNWWKWGTLILGLVIICSAAE) form the signal peptide. Topologically, residues 32–684 (NLWVTVYYGV…ISNWLWYIKI (653 aa)) are extracellular. The cysteines at positions 53 and 73 are disulfide-linked. Asn-87, Asn-132, Asn-138, Asn-152, Asn-156, Asn-183, and Asn-198 each carry an N-linked (GlcNAc...) asparagine; by host glycan. 5 disulfides stabilise this stretch: Cys-118–Cys-206, Cys-125–Cys-197, Cys-130–Cys-153, Cys-219–Cys-248, and Cys-229–Cys-240. The V1 stretch occupies residues 130–152 (CHNITIKDNNTNVDTEMKEEIKN). Residues 153–197 (CSYNMTTELRDKQRKIYSLFYRLDIVPIGGNSSNGDSSKYRLINC) are V2. N-linked (GlcNAc...) asparagine; by host glycosylation is found at Asn-242, Asn-263, Asn-277, Asn-294, Asn-302, Asn-332, Asn-339, Asn-355, and Asn-364. The interval 297-330 (CMRPNNNTRKSISIGPGRAFFATGDIIGDIRQAH) is V3. A disulfide bridge connects residues Cys-297 and Cys-331. Positions 365 to 375 (SSGGDVEITTH) are CD4-binding loop. Intrachain disulfides connect Cys-379-Cys-445 and Cys-386-Cys-418. The tract at residues 386–418 (CNTSGLFNGTWLNGTSNNTWKIDTVNDTIILPC) is V4. Residues Asn-387, Asn-393, Asn-398, Asn-402, Asn-411, Asn-448, Asn-461, Asn-462, and Asn-465 are each glycosylated (N-linked (GlcNAc...) asparagine; by host). 2 V5 regions span residues 461–471 (NNTSNETFRPG) and 463–471 (TSNETFRPG). Residues 512-532 (AIGMGAFFLGFLGAAGSTMGA) form a fusion peptide region. Residues 574–592 (KQLQARILAVERYLKDQQL) are immunosuppression. Cysteines 598 and 604 form a disulfide. Asn-611, Asn-616, and Asn-637 each carry an N-linked (GlcNAc...) asparagine; by host glycan. Positions 633–667 (KEVSNYTQVIYNLIEESQTQQEINERDLLALDKWA) form a coiled coil. Residues 662–683 (ALDKWANLWNWFDISNWLWYIK) are MPER; binding to GalCer. Residues 685-705 (FIMIVGGLIGLRIVFAVLSII) form a helical membrane-spanning segment. Topologically, residues 706–856 (NRVRQGYSPL…IRQGLERALL (151 aa)) are cytoplasmic. Residues 712-715 (YSPL) carry the YXXL motif; contains endocytosis signal motif. A disordered region spans residues 720–742 (LTHHQREPDRPERIEEGGGEQDR). Basic and acidic residues predominate over residues 723 to 742 (HQREPDRPERIEEGGGEQDR). A lipid anchor (S-palmitoyl cysteine; by host) is attached at Cys-764. A Di-leucine internalization motif motif is present at residues 855 to 856 (LL).

It belongs to the HIV-1 env protein family. As to quaternary structure, the mature envelope protein (Env) consists of a homotrimer of non-covalently associated gp120-gp41 heterodimers. The resulting complex protrudes from the virus surface as a spike. There seems to be as few as 10 spikes on the average virion. Interacts with host CD4, CCR5 and CXCR4. Gp120 also interacts with the C-type lectins CD209/DC-SIGN and CLEC4M/DC-SIGNR (collectively referred to as DC-SIGN(R)). Gp120 and gp41 interact with GalCer. Gp120 interacts with host ITGA4/ITGB7 complex; on CD4+ T-cells, this interaction results in rapid activation of integrin ITGAL/LFA-1, which facilitates efficient cell-to-cell spreading of HIV-1. Gp120 interacts with cell-associated heparan sulfate; this interaction increases virus infectivity on permissive cells and may be involved in infection of CD4- cells. The mature envelope protein (Env) consists of a homotrimer of non-covalently associated gp120-gp41 heterodimers. The resulting complex protrudes from the virus surface as a spike. There seems to be as few as 10 spikes on the average virion. In terms of processing, highly glycosylated by host. The high number of glycan on the protein is reffered to as 'glycan shield' because it contributes to hide protein sequence from adaptive immune system. Post-translationally, palmitoylation of the transmembrane protein and of Env polyprotein (prior to its proteolytic cleavage) is essential for their association with host cell membrane lipid rafts. Palmitoylation is therefore required for envelope trafficking to classical lipid rafts, but not for viral replication. Specific enzymatic cleavages in vivo yield mature proteins. Envelope glycoproteins are synthesized as an inactive precursor that is heavily N-glycosylated and processed likely by host cell furin in the Golgi to yield the mature SU and TM proteins. The cleavage site between SU and TM requires the minimal sequence [KR]-X-[KR]-R. About 2 of the 9 disulfide bonds of gp41 are reduced by P4HB/PDI, following binding to CD4 receptor.

The protein resides in the virion membrane. Its subcellular location is the host cell membrane. It is found in the host endosome membrane. Its function is as follows. Oligomerizes in the host endoplasmic reticulum into predominantly trimers. In a second time, gp160 transits in the host Golgi, where glycosylation is completed. The precursor is then proteolytically cleaved in the trans-Golgi and thereby activated by cellular furin or furin-like proteases to produce gp120 and gp41. In terms of biological role, attaches the virus to the host lymphoid cell by binding to the primary receptor CD4. This interaction induces a structural rearrangement creating a high affinity binding site for a chemokine coreceptor like CXCR4 and/or CCR5. Acts as a ligand for CD209/DC-SIGN and CLEC4M/DC-SIGNR, which are respectively found on dendritic cells (DCs), and on endothelial cells of liver sinusoids and lymph node sinuses. These interactions allow capture of viral particles at mucosal surfaces by these cells and subsequent transmission to permissive cells. HIV subverts the migration properties of dendritic cells to gain access to CD4+ T-cells in lymph nodes. Virus transmission to permissive T-cells occurs either in trans (without DCs infection, through viral capture and transmission), or in cis (following DCs productive infection, through the usual CD4-gp120 interaction), thereby inducing a robust infection. In trans infection, bound virions remain infectious over days and it is proposed that they are not degraded, but protected in non-lysosomal acidic organelles within the DCs close to the cell membrane thus contributing to the viral infectious potential during DCs' migration from the periphery to the lymphoid tissues. On arrival at lymphoid tissues, intact virions recycle back to DCs' cell surface allowing virus transmission to CD4+ T-cells. Acts as a class I viral fusion protein. Under the current model, the protein has at least 3 conformational states: pre-fusion native state, pre-hairpin intermediate state, and post-fusion hairpin state. During fusion of viral and target intracellular membranes, the coiled coil regions (heptad repeats) assume a trimer-of-hairpins structure, positioning the fusion peptide in close proximity to the C-terminal region of the ectodomain. The formation of this structure appears to drive apposition and subsequent fusion of viral and target cell membranes. Complete fusion occurs in host cell endosomes and is dynamin-dependent, however some lipid transfer might occur at the plasma membrane. The virus undergoes clathrin-dependent internalization long before endosomal fusion, thus minimizing the surface exposure of conserved viral epitopes during fusion and reducing the efficacy of inhibitors targeting these epitopes. Membranes fusion leads to delivery of the nucleocapsid into the cytoplasm. The polypeptide is Envelope glycoprotein gp160 (Homo sapiens (Human)).